A 490-amino-acid chain; its full sequence is Glutamate--tRNA ligase (490 aa).

The 'HIGH' region motif lies at 13 to 23; the sequence is PSPTGTPHVGL. The 'KMSKS' region motif lies at 257–261; the sequence is KLSKR. Lys260 contributes to the ATP binding site.

Belongs to the class-I aminoacyl-tRNA synthetase family. Glutamate--tRNA ligase type 1 subfamily. In terms of assembly, monomer.

It is found in the cytoplasm. It catalyses the reaction tRNA(Glu) + L-glutamate + ATP = L-glutamyl-tRNA(Glu) + AMP + diphosphate. Its function is as follows. Catalyzes the attachment of glutamate to tRNA(Glu) in a two-step reaction: glutamate is first activated by ATP to form Glu-AMP and then transferred to the acceptor end of tRNA(Glu). This chain is Glutamate--tRNA ligase, found in Mycobacterium bovis (strain BCG / Pasteur 1173P2).